We begin with the raw amino-acid sequence, 345 residues long: Phosphoribosylformylglycinamidine cyclo-ligase (345 aa).

This sequence belongs to the AIR synthase family.

Its subcellular location is the cytoplasm. It carries out the reaction 2-formamido-N(1)-(5-O-phospho-beta-D-ribosyl)acetamidine + ATP = 5-amino-1-(5-phospho-beta-D-ribosyl)imidazole + ADP + phosphate + H(+). Its pathway is purine metabolism; IMP biosynthesis via de novo pathway; 5-amino-1-(5-phospho-D-ribosyl)imidazole from N(2)-formyl-N(1)-(5-phospho-D-ribosyl)glycinamide: step 2/2. This is Phosphoribosylformylglycinamidine cyclo-ligase from Sodalis glossinidius (strain morsitans).